Reading from the N-terminus, the 97-residue chain is Acylphosphatase-2 (97 aa).

Ala-2 is subject to N-acetylalanine. Residues Ser-7–Tyr-97 enclose the Acylphosphatase-like domain. Residues Arg-22 and Asn-40 contribute to the active site. The residue at position 91 (Ser-91) is a Phosphoserine.

It belongs to the acylphosphatase family.

The catalysed reaction is an acyl phosphate + H2O = a carboxylate + phosphate + H(+). Its physiological role is not yet clear. The protein is Acylphosphatase-2 (Acyp2) of Rattus norvegicus (Rat).